The primary structure comprises 246 residues: Osmotin-like protein TPM-1 (246 aa).

A signal peptide spans 1–21 (MAYLRSSFVFFLLAFVTYTYA). Intrachain disulfides connect Cys30–Cys225, Cys72–Cys82, Cys87–Cys93, Cys141–Cys213, Cys146–Cys196, Cys154–Cys164, Cys168–Cys177, and Cys178–Cys183.

The protein belongs to the thaumatin family.

The protein resides in the vacuole. The enzyme catalyses Endohydrolysis of (1-&gt;3)- or (1-&gt;4)-linkages in beta-D-glucans when the glucose residue whose reducing group is involved in the linkage to be hydrolyzed is itself substituted at C-3.. Functionally, antifungal protein that inhibits the growth of several phytopathogenic fungi (e.g. Trichothecium roseum, Fusarium oxysporum, Phytophthora citrophthora and Colletotrichum coccodes). May bind to beta-glucans and have beta-1,3-D-glucanase activity. This is Osmotin-like protein TPM-1 from Solanum lycopersicum (Tomato).